We begin with the raw amino-acid sequence, 479 residues long: Trigger factor (479 aa).

Positions 174–261 (GDIAVVSFSG…LKELKTRELP (88 aa)) constitute a PPIase FKBP-type domain. Residues 438–479 (VLESEAKTSKPAAKSKGSKTKSTKTKTNKANTEKPASDKSKS) are disordered. Positions 453–464 (KGSKTKSTKTKT) are enriched in basic residues. The segment covering 468 to 479 (NTEKPASDKSKS) has biased composition (basic and acidic residues).

This sequence belongs to the FKBP-type PPIase family. Tig subfamily.

It localises to the cytoplasm. The catalysed reaction is [protein]-peptidylproline (omega=180) = [protein]-peptidylproline (omega=0). In terms of biological role, involved in protein export. Acts as a chaperone by maintaining the newly synthesized protein in an open conformation. Functions as a peptidyl-prolyl cis-trans isomerase. The sequence is that of Trigger factor from Prochlorococcus marinus (strain MIT 9313).